We begin with the raw amino-acid sequence, 438 residues long: UDP-N-acetylmuramoylalanine--D-glutamate ligase (438 aa).

ATP is bound at residue 112–118; the sequence is GSNGKST.

It belongs to the MurCDEF family.

It is found in the cytoplasm. The enzyme catalyses UDP-N-acetyl-alpha-D-muramoyl-L-alanine + D-glutamate + ATP = UDP-N-acetyl-alpha-D-muramoyl-L-alanyl-D-glutamate + ADP + phosphate + H(+). It functions in the pathway cell wall biogenesis; peptidoglycan biosynthesis. Functionally, cell wall formation. Catalyzes the addition of glutamate to the nucleotide precursor UDP-N-acetylmuramoyl-L-alanine (UMA). The chain is UDP-N-acetylmuramoylalanine--D-glutamate ligase from Yersinia pseudotuberculosis serotype I (strain IP32953).